A 117-amino-acid polypeptide reads, in one-letter code: NADH-ubiquinone oxidoreductase chain 3 (117 aa).

Helical transmembrane passes span 2-22, 56-76, and 85-105; these read ILYV…IYLL, FFIL…LFPV, and SPLI…GLLY.

Belongs to the complex I subunit 3 family.

It localises to the mitochondrion membrane. The catalysed reaction is a ubiquinone + NADH + 5 H(+)(in) = a ubiquinol + NAD(+) + 4 H(+)(out). In terms of biological role, core subunit of the mitochondrial membrane respiratory chain NADH dehydrogenase (Complex I) that is believed to belong to the minimal assembly required for catalysis. Complex I functions in the transfer of electrons from NADH to the respiratory chain. The immediate electron acceptor for the enzyme is believed to be ubiquinone. The sequence is that of NADH-ubiquinone oxidoreductase chain 3 (ND3) from Albinaria caerulea (Land snail).